Consider the following 364-residue polypeptide: DNA replication and repair protein RecF (364 aa).

30–37 (GDNAQGKT) contributes to the ATP binding site.

Belongs to the RecF family.

It is found in the cytoplasm. In terms of biological role, the RecF protein is involved in DNA metabolism; it is required for DNA replication and normal SOS inducibility. RecF binds preferentially to single-stranded, linear DNA. It also seems to bind ATP. This is DNA replication and repair protein RecF from Clostridium kluyveri (strain ATCC 8527 / DSM 555 / NBRC 12016 / NCIMB 10680 / K1).